The sequence spans 93 residues: Putative sodium channel toxin Ts41 (93 aa).

Positions 1-23 (MKIGVLFTIISMLCLLEVRKICS) are cleaved as a signal peptide. Cystine bridges form between Cys-22–Cys-87, Cys-39–Cys-62, Cys-48–Cys-67, and Cys-52–Cys-69. The LCN-type CS-alpha/beta domain occupies 26–88 (EGGYPRYFSF…FWNVYRKYCK (63 aa)).

Belongs to the long (4 C-C) scorpion toxin superfamily. Expressed by the venom gland.

The protein resides in the secreted. Functionally, the edited BmKBTx-like may modulate voltage-gated sodium channels (Nav). Its function is as follows. The non-edited form is able to form a heterodimer. In orthologs, a heterodimer with LVP beta-chain induces lipolysis in rat adipocytes, which is mediated through the beta-2 adrenergic receptor pathway (ADRB2). Since no LVP beta-chains have been identified in the venom of this scorpion, it is possible that this protein is not involved in a lipolysis process. This chain is Putative sodium channel toxin Ts41, found in Tityus serrulatus (Brazilian scorpion).